A 542-amino-acid chain; its full sequence is CTP synthase (542 aa).

Residues 1–265 (MPRYIFITGG…DTEILRCFGI (265 aa)) form an amidoligase domain region. Serine 13 serves as a coordination point for CTP. Serine 13 contributes to the UTP binding site. Residue 14–19 (SLGKGL) coordinates ATP. Residue tyrosine 54 coordinates L-glutamine. ATP is bound at residue aspartate 71. Aspartate 71 and glutamate 139 together coordinate Mg(2+). Residues 146–148 (DIE), 186–191 (KTKPTQ), and lysine 222 each bind CTP. UTP contacts are provided by residues 186-191 (KTKPTQ) and lysine 222. 238–240 (RDA) contacts ATP. The 244-residue stretch at 298 to 541 (YVGLLDAYKS…IAAALHQSRM (244 aa)) folds into the Glutamine amidotransferase type-1 domain. Glycine 353 lines the L-glutamine pocket. Cysteine 380 functions as the Nucleophile; for glutamine hydrolysis in the catalytic mechanism. L-glutamine is bound by residues 381–384 (YGMQ), glutamate 404, and arginine 469. Active-site residues include histidine 514 and glutamate 516.

Belongs to the CTP synthase family. In terms of assembly, homotetramer.

The catalysed reaction is UTP + L-glutamine + ATP + H2O = CTP + L-glutamate + ADP + phosphate + 2 H(+). It catalyses the reaction L-glutamine + H2O = L-glutamate + NH4(+). It carries out the reaction UTP + NH4(+) + ATP = CTP + ADP + phosphate + 2 H(+). It participates in pyrimidine metabolism; CTP biosynthesis via de novo pathway; CTP from UDP: step 2/2. With respect to regulation, allosterically activated by GTP, when glutamine is the substrate; GTP has no effect on the reaction when ammonia is the substrate. The allosteric effector GTP functions by stabilizing the protein conformation that binds the tetrahedral intermediate(s) formed during glutamine hydrolysis. Inhibited by the product CTP, via allosteric rather than competitive inhibition. In terms of biological role, catalyzes the ATP-dependent amination of UTP to CTP with either L-glutamine or ammonia as the source of nitrogen. Regulates intracellular CTP levels through interactions with the four ribonucleotide triphosphates. The sequence is that of CTP synthase from Maricaulis maris (strain MCS10) (Caulobacter maris).